The primary structure comprises 723 residues: Zinc finger CCCH domain-containing protein 11A (723 aa).

C3H1-type zinc fingers lie at residues Ser2–Ala29, Leu31–Ile57, and Lys60–Gly87. Disordered regions lie at residues Glu142–Asp208, Lys223–Asn256, Lys404–Glu428, Glu450–Leu526, and Val565–Ser681. The span at Ala160 to Glu175 shows a compositional bias: acidic residues. Positions Lys376–Lys411 form a coiled coil. A compositionally biased stretch (polar residues) spans Pro511–Gln522. The span at Lys609–Pro620 shows a compositional bias: low complexity. Over residues Leu637–Glu649 the composition is skewed to polar residues. Residues Gln650 to Ser672 are compositionally biased toward low complexity.

It localises to the nucleus speckle. Through its association with TREX complex components, may participate in the export and post-transcriptional coordination of selected mRNA transcripts. Binds RNA. The sequence is that of Zinc finger CCCH domain-containing protein 11A (ZC3H11A) from Gallus gallus (Chicken).